The primary structure comprises 100 residues: NADH-quinone oxidoreductase subunit K (100 aa).

A run of 3 helical transmembrane segments spans residues 1 to 21 (MIGL…GLAG), 28 to 48 (ILLL…GFVA), and 64 to 84 (FIIA…ILWF).

This sequence belongs to the complex I subunit 4L family. NDH-1 is composed of 14 different subunits. Subunits NuoA, H, J, K, L, M, N constitute the membrane sector of the complex.

The protein resides in the cell inner membrane. The enzyme catalyses a quinone + NADH + 5 H(+)(in) = a quinol + NAD(+) + 4 H(+)(out). In terms of biological role, NDH-1 shuttles electrons from NADH, via FMN and iron-sulfur (Fe-S) centers, to quinones in the respiratory chain. The immediate electron acceptor for the enzyme in this species is believed to be ubiquinone. Couples the redox reaction to proton translocation (for every two electrons transferred, four hydrogen ions are translocated across the cytoplasmic membrane), and thus conserves the redox energy in a proton gradient. This Helicobacter pylori (strain B38) protein is NADH-quinone oxidoreductase subunit K.